Consider the following 723-residue polypeptide: MIYQAKTLQVKQLANGIAELSFCAPASVNKLDLHTLESLDKALDALAADSSVKGLLLSSDKEAFIVGADITEFLGLFAKPEAELDEWLQFANRIFNKLEDLPFPTLSALKGHTLGGGCECVLATDFRIGDATTSIGLPETKLGIMPGFGGTVRLPRLIGADSAMEIITQGKACRAEEALKVGLLDAIVDSDKLIDSAITTLTQAIEEKLDWQKRRQQKTSALTLSKLEAMMSFTMAKGMVAQVAGKHYPAPMTSVVTIEEAARLPRDAALDIERKHFIKLAKSTEAQALVGIFLNDQYIKGLAKQSAKAASQDTQHAAVLGAGIMGGGIAYQSALKGVPVLMKDIAPHSLELGMTEAAKLLNKQLERGKIDGFKMAGILASITPSLHYAGIDQADVIVEAVVENPKVKAAVLSEVEGLVDTETILTSNTSTIPINLLAKSLKRPQNFCGMHFFNPVHRMPLVEIIRGEHTSEDTINRVVAYAAKMGKSPIVVNDCPGFFVNRVLFPYFAGFSLLMRDGANFTEIDKVMERQFGWPMGPAYLLDVVGIDTAHHAQAVMAEGFPTRMAKSGREAIDALYEAKKFGQKNGSGFYQYTVDKKGKPKKAFSDDVLAILAPVCGAPQSFDPQTLIERTMIPMINEVVLCLEEGIIASAQEADMALVYGLGFPPFRGGVFRYLDTIGIANYVAMAEKYADLGALYQVPQLLKNMAQQGTSFYSAQQVSAL.

The enoyl-CoA hydratase/isomerase stretch occupies residues 1-189 (MIYQAKTLQV…KVGLLDAIVD (189 aa)). Aspartate 296 is a binding site for substrate. The tract at residues 311–723 (SQDTQHAAVL…FYSAQQVSAL (413 aa)) is 3-hydroxyacyl-CoA dehydrogenase. NAD(+)-binding positions include methionine 325, aspartate 344, 401–403 (VVE), lysine 408, and serine 430. Residue histidine 451 is the For 3-hydroxyacyl-CoA dehydrogenase activity of the active site. Residue asparagine 454 coordinates NAD(+). Substrate contacts are provided by asparagine 501 and tyrosine 661.

The protein in the N-terminal section; belongs to the enoyl-CoA hydratase/isomerase family. This sequence in the C-terminal section; belongs to the 3-hydroxyacyl-CoA dehydrogenase family. As to quaternary structure, heterotetramer of two alpha chains (FadB) and two beta chains (FadA).

The catalysed reaction is a (3S)-3-hydroxyacyl-CoA + NAD(+) = a 3-oxoacyl-CoA + NADH + H(+). It carries out the reaction a (3S)-3-hydroxyacyl-CoA = a (2E)-enoyl-CoA + H2O. It catalyses the reaction a 4-saturated-(3S)-3-hydroxyacyl-CoA = a (3E)-enoyl-CoA + H2O. The enzyme catalyses (3S)-3-hydroxybutanoyl-CoA = (3R)-3-hydroxybutanoyl-CoA. The catalysed reaction is a (3Z)-enoyl-CoA = a 4-saturated (2E)-enoyl-CoA. It carries out the reaction a (3E)-enoyl-CoA = a 4-saturated (2E)-enoyl-CoA. It functions in the pathway lipid metabolism; fatty acid beta-oxidation. Involved in the aerobic and anaerobic degradation of long-chain fatty acids via beta-oxidation cycle. Catalyzes the formation of 3-oxoacyl-CoA from enoyl-CoA via L-3-hydroxyacyl-CoA. It can also use D-3-hydroxyacyl-CoA and cis-3-enoyl-CoA as substrate. The polypeptide is Fatty acid oxidation complex subunit alpha (Vibrio cholerae serotype O1 (strain ATCC 39315 / El Tor Inaba N16961)).